Reading from the N-terminus, the 226-residue chain is 2,3-bisphosphoglycerate-dependent phosphoglycerate mutase (226 aa).

Substrate-binding positions include 8-15 (RHGQSVWN), 21-22 (TG), Arg58, 109-112 (ERMY), Lys120, 136-137 (RR), and 180-181 (GN). His9 functions as the Tele-phosphohistidine intermediate in the catalytic mechanism. Glu109 (proton donor/acceptor) is an active-site residue.

This sequence belongs to the phosphoglycerate mutase family. BPG-dependent PGAM subfamily.

The enzyme catalyses (2R)-2-phosphoglycerate = (2R)-3-phosphoglycerate. It functions in the pathway carbohydrate degradation; glycolysis; pyruvate from D-glyceraldehyde 3-phosphate: step 3/5. Catalyzes the interconversion of 2-phosphoglycerate and 3-phosphoglycerate. This chain is 2,3-bisphosphoglycerate-dependent phosphoglycerate mutase, found in Chlamydia trachomatis serovar L2b (strain UCH-1/proctitis).